We begin with the raw amino-acid sequence, 187 residues long: Elongation factor P (187 aa).

This sequence belongs to the elongation factor P family.

The protein resides in the cytoplasm. It participates in protein biosynthesis; polypeptide chain elongation. Its function is as follows. Involved in peptide bond synthesis. Stimulates efficient translation and peptide-bond synthesis on native or reconstituted 70S ribosomes in vitro. Probably functions indirectly by altering the affinity of the ribosome for aminoacyl-tRNA, thus increasing their reactivity as acceptors for peptidyl transferase. This chain is Elongation factor P, found in Roseiflexus castenholzii (strain DSM 13941 / HLO8).